A 192-amino-acid polypeptide reads, in one-letter code: Erythropoietin (192 aa).

An N-terminal signal peptide occupies residues Met1–Gly25. Cystine bridges form between Cys32–Cys187 and Cys54–Cys58. Asn49 carries an N-linked (GlcNAc...) asparagine glycan. N-linked (GlcNAc...) asparagine glycans are attached at residues Asn63 and Asn108.

The protein belongs to the EPO/TPO family. As to expression, produced by kidney or liver of adult mammals and by liver of fetal or neonatal mammals.

The protein resides in the secreted. Functionally, hormone involved in the regulation of erythrocyte proliferation and differentiation and the maintenance of a physiological level of circulating erythrocyte mass. Binds to EPOR leading to EPOR dimerization and JAK2 activation thereby activating specific downstream effectors, including STAT1 and STAT3. In Bos mutus grunniens (Wild yak), this protein is Erythropoietin (EPO).